The chain runs to 289 residues: 2,3-dimethylmalate lyase (289 aa).

Belongs to the isocitrate lyase/PEP mutase superfamily. Homotetramer. Mg(2+) serves as cofactor.

The catalysed reaction is (2R,3S)-2,3-dimethylmalate = propanoate + pyruvate. It participates in cofactor degradation; nicotinate degradation; propanoate and pyruvate from 6-hydroxynicotinate: step 8/8. Its activity is regulated as follows. Completely inhibited by propionic anhydride and by cystamine. Irreversibly inhibited by the mercapto reagents iodoacetate and iodoacetamide. Unaffected by hydroxylamine. Functionally, catalyzes the formation of proponate and pyruvate from (2R,3S)-2,3-dimethylmalate. Has no activity toward dimethylmaleate, malate, citramalate, isocitrate and citrate. The polypeptide is 2,3-dimethylmalate lyase (Eubacterium barkeri (Clostridium barkeri)).